The following is a 529-amino-acid chain: Tyrosine-protein kinase Fgr (529 aa).

Gly2 carries the N-myristoyl glycine lipid modification. S-palmitoyl cysteine attachment occurs at residues Cys3 and Cys6. Phosphotyrosine is present on Tyr34. In terms of domain architecture, SH3 spans 77-138 (IGVTLFIALY…PSNYVAPVDS (62 aa)). Residues 144 to 241 (WYFGKIGRKD…GLCNLLIAPC (98 aa)) enclose the SH2 domain. Tyr208 is subject to Phosphotyrosine. Ser218 carries the post-translational modification Phosphoserine. The region spanning 263–516 (ITLERRLGTG…YLQSFLEDYF (254 aa)) is the Protein kinase domain. ATP is bound by residues 269–277 (LGTGCFGDV) and Lys291. Asp382 acts as the Proton acceptor in catalysis. Tyr412 carries the post-translational modification Phosphotyrosine. Position 523 is a phosphotyrosine; by SRC (Tyr523).

This sequence belongs to the protein kinase superfamily. Tyr protein kinase family. SRC subfamily. In terms of assembly, interacts with ITGB1, ITGB2, MS4A2/FCER1B, FCER1G, FCGR2A and/or FCGR2B. Interacts (via SH2 domain) with SYK (tyrosine phosphorylated). Interacts (via SH2 domain) with FLT3 (tyrosine phosphorylated). Interacts with PTK2/FAK1. Interacts (via SH2 domain) with HCLS1 (tyrosine phosphorylated by SYK). Interacts with SIRPA and PTPNS1. Interacts (not phosphorylated on tyrosine residues) with CBL; FGR tyrosine phosphorylation promotes dissociation. Interacts with PIK3R1 and FASLG. Interacts with CLNK. In terms of processing, ubiquitinated. Becomes ubiquitinated in response to ITGB2 signaling; this does not lead to degradation. Phosphorylated. Autophosphorylated on tyrosine residues. Becomes phosphorylated in response to FCGR2A and/or FCGR2B engagement, cell adhesion and signaling by ITGB2. Prior phosphorylation at Tyr-523 by SRC inhibits ulterior autophosphorylation at Tyr-412. As to expression, detected in neutrophils, monocytes and natural killer cells (at protein level). Detected in monocytes and large lymphocytes.

The protein localises to the cell membrane. It localises to the cell projection. The protein resides in the ruffle membrane. It is found in the cytoplasm. Its subcellular location is the cytosol. The protein localises to the cytoskeleton. It localises to the mitochondrion inner membrane. The protein resides in the mitochondrion intermembrane space. It catalyses the reaction L-tyrosyl-[protein] + ATP = O-phospho-L-tyrosyl-[protein] + ADP + H(+). With respect to regulation, activated by autophosphorylation. Prior phosphorylation at Tyr-523 by SRC inhibits ulterior autophosphorylation at Tyr-412. Activated by phorbol myristate acetate, phosphatidic acid and poly-Lys. Binding (via SH2 domain) of HCLS1 that is already phosphorylated by SYK strongly increases kinase activity. Non-receptor tyrosine-protein kinase that transmits signals from cell surface receptors devoid of kinase activity and contributes to the regulation of immune responses, including neutrophil, monocyte, macrophage and mast cell functions, cytoskeleton remodeling in response to extracellular stimuli, phagocytosis, cell adhesion and migration. Promotes mast cell degranulation, release of inflammatory cytokines and IgE-mediated anaphylaxis. Acts downstream of receptors that bind the Fc region of immunoglobulins, such as MS4A2/FCER1B, FCGR2A and/or FCGR2B. Acts downstream of ITGB1 and ITGB2, and regulates actin cytoskeleton reorganization, cell spreading and adhesion. Depending on the context, activates or inhibits cellular responses. Functions as a negative regulator of ITGB2 signaling, phagocytosis and SYK activity in monocytes. Required for normal ITGB1 and ITGB2 signaling, normal cell spreading and adhesion in neutrophils and macrophages. Functions as a positive regulator of cell migration and regulates cytoskeleton reorganization via RAC1 activation. Phosphorylates SYK (in vitro) and promotes SYK-dependent activation of AKT1 and MAP kinase signaling. Phosphorylates PLD2 in antigen-stimulated mast cells, leading to PLD2 activation and the production of the signaling molecules lysophosphatidic acid and diacylglycerol. Promotes activation of PIK3R1. Phosphorylates FASLG, and thereby regulates its ubiquitination and subsequent internalization. Phosphorylates ABL1. Promotes phosphorylation of CBL, CTTN, PIK3R1, PTK2/FAK1, PTK2B/PYK2 and VAV2. Phosphorylates HCLS1 that has already been phosphorylated by SYK, but not unphosphorylated HCLS1. Together with CLNK, it acts as a negative regulator of natural killer cell-activating receptors and inhibits interferon-gamma production. The sequence is that of Tyrosine-protein kinase Fgr (FGR) from Homo sapiens (Human).